Here is an 87-residue protein sequence, read N- to C-terminus: Small ribosomal subunit protein uS15c (87 aa).

The protein belongs to the universal ribosomal protein uS15 family. Part of the 30S ribosomal subunit.

The protein resides in the plastid. It localises to the chloroplast. The polypeptide is Small ribosomal subunit protein uS15c (rps15) (Illicium oligandrum (Star anise)).